The following is a 163-amino-acid chain: Cyclic pyranopterin monophosphate synthase (163 aa).

Substrate contacts are provided by residues 78–80 (LCH) and 116–117 (ME). Asp131 is an active-site residue.

The protein belongs to the MoaC family. Homohexamer; trimer of dimers.

It carries out the reaction (8S)-3',8-cyclo-7,8-dihydroguanosine 5'-triphosphate = cyclic pyranopterin phosphate + diphosphate. It participates in cofactor biosynthesis; molybdopterin biosynthesis. Its function is as follows. Catalyzes the conversion of (8S)-3',8-cyclo-7,8-dihydroguanosine 5'-triphosphate to cyclic pyranopterin monophosphate (cPMP). The chain is Cyclic pyranopterin monophosphate synthase from Agrobacterium fabrum (strain C58 / ATCC 33970) (Agrobacterium tumefaciens (strain C58)).